Reading from the N-terminus, the 291-residue chain is MERLFCVPCGYGTTDPLTYPGPWRHCQQQNWPQNMGAPIFLARLRVPANVSQSCMNPYNRAQLQAVSTQMDPNLSLWLRSVHTTEVGVQVSLRVDKSVQCSQGSQTLHSSSLSDRTSSRKPTEAWEVGRRALIRRPQDGEDEESQEELTGPTEASQLLLPTWSRDREEQFPRLKELGEEYAHSPQDRKGKQFLELKYGYFHCKDCKRRWESAYVWCISGTNKVYFKQLCNKCQKSFNPYRVEEIQCQTCLRVCCSCSPKKRHIDVRRPHRQELCGHCKDKKFSCSVFFSLK.

The segment at G103–T152 is disordered. The span at T106 to R115 shows a compositional bias: low complexity. Residues T116–R129 show a composition bias toward basic and acidic residues. A 3CxxC-type zinc finger spans residues L195–K280.

The protein belongs to the ZAR1 family. Interacts with YBX2. In terms of tissue distribution, expressed in oocytes and zygotes. Predominantly expressed in maturing oocytes before maternal-to-zygotic transition (MZT). Less abundant than Zar1.

The protein localises to the cytoplasm. It is found in the cytoplasmic ribonucleoprotein granule. In terms of biological role, mRNA-binding protein required for maternal mRNA storage, translation and degradation during oocyte maturation. Probably promotes formation of some phase-separated membraneless compartment that stores maternal mRNAs in oocytes: acts by undergoing liquid-liquid phase separation upon binding to maternal mRNAs. Binds to the 3'-UTR of maternal mRNAs, inhibiting their translation. This Mus musculus (Mouse) protein is Protein ZAR1-like.